The sequence spans 111 residues: Iron-sulfur cluster assembly protein CyaY (111 aa).

Belongs to the frataxin family.

Its function is as follows. Involved in iron-sulfur (Fe-S) cluster assembly. May act as a regulator of Fe-S biogenesis. The sequence is that of Iron-sulfur cluster assembly protein CyaY from Cupriavidus pinatubonensis (strain JMP 134 / LMG 1197) (Cupriavidus necator (strain JMP 134)).